Consider the following 1062-residue polypeptide: SLIT-ROBO Rho GTPase-activating protein 1 (1062 aa).

The F-BAR domain occupies 19-314 (SQVKEIRAQL…AVDNLEPRSD (296 aa)). A coiled-coil region spans residues 352-382 (QAELMLRNQQLQSRLATLKIESEEVKKTTEA). Ser416 carries the phosphoserine modification. The region spanning 481-671 (GRRNSHARHQ…TIIIHHETIF (191 aa)) is the Rho-GAP domain. In terms of domain architecture, SH3 spans 720-779 (CEPIEAIAKFDYVGRSARELSFKKGASLLLYHRASEDWWEGRHNGIDGLVPHQYIVVQDM). A compositionally biased stretch (polar residues) spans 785 to 799 (DTLSQKADSEASSGP). Residues 785–931 (DTLSQKADSE…TGFNDHKPLD (147 aa)) form a disordered region. Ser812 and Ser894 each carry phosphoserine. Basic and acidic residues predominate over residues 899–908 (SRHDSLKKID). Ser909 carries the phosphoserine modification. Positions 914–923 (RSTSSGQYTG) are enriched in polar residues. Positions 933–960 (ETIAQDIEETMNTALNELRELERQSTVK) form a coiled coil. Over residues 974–988 (KNSPTPATSTESLSP) the composition is skewed to polar residues. Disordered regions lie at residues 974 to 1013 (KNSP…ETMS) and 1028 to 1062 (KPPA…SCTM). Ser976 is modified (phosphoserine). Thr978 is subject to Phosphothreonine. A compositionally biased stretch (low complexity) spans 1004 to 1013 (STSSSSETMS). Ser1009 carries the post-translational modification Phosphoserine. Residues 1053-1062 (QGPTDKSCTM) show a composition bias toward polar residues.

As to quaternary structure, homodimer. Forms a heterooligomer with SRGAP2 and SRGAP3 through its F-BAR domain. Interacts with CDC42 and RHOA. Interacts with FASLG. Interacts (via SH3 domain) with ROBO1.

In terms of biological role, GTPase-activating protein for RhoA and Cdc42 small GTPases. Together with CDC42 seems to be involved in the pathway mediating the repulsive signaling of Robo and Slit proteins in neuronal migration. SLIT2, probably through interaction with ROBO1, increases the interaction of SRGAP1 with ROBO1 and inactivates CDC42. The protein is SLIT-ROBO Rho GTPase-activating protein 1 (Srgap1) of Mus musculus (Mouse).